Reading from the N-terminus, the 189-residue chain is Class A basic helix-loop-helix protein 15 (189 aa).

The segment covering 1 to 12 (MKTKNRPPRRRA) has biased composition (basic residues). Disordered regions lie at residues 1-85 (MKTK…ERER) and 167-189 (TEAQ…REGT). Phosphothreonine is present on Thr-25. Residues 68-85 (GRRDSSIQRRLESNERER) are compositionally biased toward basic and acidic residues. The 53-residue stretch at 75–127 (QRRLESNERERQRMHKLNNAFQALREVIPHVRADKKLSKIETLTLAKNYIKSL) folds into the bHLH domain.

In terms of assembly, forms homodimers or heterodimers with TCF3 gene products E12 and E47. These dimers bind to the E-box site, however, heterodimer with MYOD1 does not bind target DNA. Expressed in brain, liver, spleen and skeletal muscle.

Its subcellular location is the nucleus. Plays a role in controlling the transcriptional activity of MYOD1, ensuring that expanding myoblast populations remain undifferentiated. Repression may occur through muscle-specific E-box occupancy by homodimers. May also negatively regulate bHLH-mediated transcription through an N-terminal repressor domain. Serves as a key regulator of acinar cell function, stability, and identity. Also required for normal organelle localization in exocrine cells and for mitochondrial calcium ion transport. May function as a unique regulator of gene expression in several different embryonic and postnatal cell lineages. Binds to the E-box consensus sequence 5'-CANNTG-3'. This Homo sapiens (Human) protein is Class A basic helix-loop-helix protein 15 (BHLHA15).